The primary structure comprises 186 residues: Bifunctional protein PyrR (186 aa).

Residues 101–113 (VVLVDDVLYTGRT) carry the PRPP-binding motif.

The protein belongs to the purine/pyrimidine phosphoribosyltransferase family. PyrR subfamily.

It carries out the reaction UMP + diphosphate = 5-phospho-alpha-D-ribose 1-diphosphate + uracil. Regulates the transcription of the pyrimidine nucleotide (pyr) operon in response to exogenous pyrimidines. Its function is as follows. Also displays a weak uracil phosphoribosyltransferase activity which is not physiologically significant. This chain is Bifunctional protein PyrR, found in Syntrophobacter fumaroxidans (strain DSM 10017 / MPOB).